A 649-amino-acid polypeptide reads, in one-letter code: Forkhead box protein O1 (649 aa).

Disordered regions lie at residues Met1–Ser62 and Val112–Arg151. Position 24 is a phosphothreonine; by PKB/AKT1 or PKB/AKT2 and SGK1 (Thr24). The segment covering Asn33–Ser62 has biased composition (low complexity). Pro residues predominate over residues Pro116 to Ala135. A DNA-binding region (fork-head) is located at residues Trp154–Ala248. DNA-binding regions lie at residues Asn205–Ser212 and Ser228–Trp231. At Ser206 the chain carries Phosphoserine; by STK4/MST1. Ser212, Ser228, and Ser229 each carry phosphoserine. A disordered region spans residues Ser228–Ser339. Lys239 and Lys242 each carry N6-acetyllysine. Residue Ser243 is modified to Phosphoserine; by CDK1. Omega-N-methylarginine; by PRMT1 is present on residues Arg245 and Arg247. The Nuclear localization signal signature appears at Arg245 to Arg247. A Phosphoserine; by PKB/AKT1 and SGK1 modification is found at Ser250. 3 positions are modified to N6-acetyllysine: Lys256, Lys259, and Lys268. Basic residues predominate over residues Ala258–Ala269. A sufficient for interaction with NLK region spans residues Gly277–Gln557. A phosphoserine mark is found at Ser281 and Ser292. Residues Asn303 to Gly320 show a composition bias toward polar residues. Residue Ser313 is modified to Phosphoserine; by PKB/AKT1. Ser316 bears the Phosphoserine; by CK1 and SGK1 mark. At Ser319 the chain carries Phosphoserine; by CK1. Position 323 is a phosphoserine (Ser323). Residue Thr327 is modified to Phosphothreonine. The segment at Ser357–Pro453 is required for interaction with RUNX2. The residue at position 417 (Lys417) is an N6-acetyllysine. The Required for interaction with SIRT1 signature appears at Leu456 to Leu460.

As to quaternary structure, interacts with LRPPRC. Interacts with RUNX2; the interaction inhibits RUNX2 transcriptional activity and mediates the IGF1/insulin-dependent BGLAP expression in osteoblasts Interacts with PPP2R1A; the interaction regulates the dephosphorylation of FOXO1 at Thr-24 and Ser-250 leading to its nuclear import. Interacts with NLK. Interacts with SIRT1; the interaction results in the deacetylation of FOXO1 leading to activation of FOXO1-mediated transcription of genes involved in DNA repair and stress resistance. Binds to CDK1. Interacts with the 14-3-3 proteins, YWHAG and YWHAZ; the interactions require insulin-stimulated phosphorylation on Thr-24, promote nuclear exit and loss of transcriptional activity. Interacts with SKP2; the interaction ubiquitinates FOXO1 leading to its proteasomal degradation. The interaction requires the presence of KRIT1. Interacts (via the C-terminal half) with ATF4 (via its DNA binding domain); the interaction occurs in osteoblasts, regulates glucose homeostasis via suppression of beta-cell proliferation and subsequent decrease in insulin production. Interacts with PRMT1; the interaction methylates FOXO1, prevents PKB/AKT1 phosphorylation and retains FOXO1 in the nucleus. Interacts with EP300 and CREBBP; the interactions acetylate FOXO1. Interacts with SIRT2; the interaction is disrupted in response to oxidative stress or serum deprivation, leading to increased level of acetylated FOXO1, which promotes stress-induced autophagy by stimulating E1-like activating enzyme ATG7. Interacts (acetylated form) with ATG7; the interaction is increased in response to oxidative stress or serum deprivation and promotes the autophagic process leading to cell death. Interacts (acetylated form) with PPARG. Interacts with XBP1; this interaction is direct and leads to FOXO1 ubiquitination and degradation via the proteasome pathway. Interacts (via the Fork-head domain) with CEBPA; the interaction increases when FOXO1 is deacetylated. Interacts with WDFY2. Forms a complex with WDFY2 and AKT1. Interacts with CRY1. Interacts with PPIA/CYPA; the interaction promotes FOXO1 dephosphorylation, nuclear accumulation and transcriptional activity. Interacts with TOX4; FOXO1 is required for full induction of TOX4-dependent activity and the interaction is inhibited by insulin. Interacts (when phosphorylated on Ser-250) with STUB1/CHIP. Post-translationally, phosphorylation by NLK promotes nuclear export and inhibits the transcriptional activity. In response to growth factors, phosphorylation on Thr-24, Ser-250 and Ser-313 by PKB/AKT1 promotes nuclear export and inactivation of transactivational activity. Phosphorylation on Thr-24 is required for binding 14-3-3 proteins. Phosphorylation of Ser-250 decreases DNA-binding activity and promotes the phosphorylation of Thr-24 and Ser-313, permitting phosphorylation of Ser-316 and Ser-319, probably by CDK1, leading to nuclear exclusion and loss of function. Stress signals, such as response to oxygen or nitric oxide, attenuate the PKB/AKT1-mediated phosphorylation leading to nuclear retention. Phosphorylation of Ser-323 is independent of IGF1 and leads to reduced function. Dephosphorylated on Thr-24 and Ser-250 by PP2A in beta-cells under oxidative stress leading to nuclear retention. Phosphorylation of Ser-243 by CDK1 disrupts binding of 14-3-3 proteins leading to nuclear accumulation and has no effect on DNA binding nor transcriptional activity. Phosphorylation by STK4/MST1 on Ser-206, upon oxidative stress, inhibits binding to 14-3-3 proteins and nuclear export. PPIA/CYPA promotes its dephosphorylation on Ser-250. In terms of processing, ubiquitinated by SKP2. Ubiquitination leads to proteasomal degradation. Ubiquitinated by STUB1/CHIP; when Ser-250 is phosphorylated. Methylation inhibits AKT1-mediated phosphorylation at Ser-250 and is increased by oxidative stress. Post-translationally, acetylated. Acetylation at Lys-256 and Lys-268 are necessary for autophagic cell death induction. Deacetylated by SIRT2 in response to oxidative stress or serum deprivation, thereby negatively regulating FOXO1-mediated autophagic cell death. Once in the nucleus, acetylated by CREBBP/EP300. Acetylation diminishes the interaction with target DNA and attenuates the transcriptional activity. It increases the phosphorylation at Ser-250. Deacetylation by SIRT1 results in reactivation of the transcriptional activity. Oxidative stress by hydrogen peroxide treatment appears to promote deacetylation and uncoupling of insulin-induced phosphorylation. By contrast, resveratrol acts independently of acetylation. Acetylated at Lys-417, promoting its localization to the nucleus and transcription factor activity. Deacetylation at Lys-417 by SIRT6, promotes its translocation into the cytoplasm, preventing its transcription factor activity. Deacetylation and subsequent inhibition by SIRT6 has different effects depending on cell types: it inhibits gluconeogenesis in hepatocytes, promotes glucose sensing in pancreatic beta-cells and regulates lipid catabolism in brown adipocytes. Expressed in the internal elastic lamina of the carotid artery (at protein level).

Its subcellular location is the cytoplasm. The protein localises to the nucleus. Transcription factor that is the main target of insulin signaling and regulates metabolic homeostasis in response to oxidative stress. Binds to the insulin response element (IRE) with consensus sequence 5'-TT[G/A]TTTTG-3' and the related Daf-16 family binding element (DBE) with consensus sequence 5'-TT[G/A]TTTAC-3'. Activity suppressed by insulin. Main regulator of redox balance and osteoblast numbers and controls bone mass. Orchestrates the endocrine function of the skeleton in regulating glucose metabolism. Also acts as a key regulator of chondrogenic commitment of skeletal progenitor cells in response to lipid availability: when lipids levels are low, translocates to the nucleus and promotes expression of SOX9, which induces chondrogenic commitment and suppresses fatty acid oxidation. Acts synergistically with ATF4 to suppress osteocalcin/BGLAP activity, increasing glucose levels and triggering glucose intolerance and insulin insensitivity. Also suppresses the transcriptional activity of RUNX2, an upstream activator of osteocalcin/BGLAP. Acts as an inhibitor of glucose sensing in pancreatic beta cells by acting as a transcription repressor and suppressing expression of PDX1. In hepatocytes, promotes gluconeogenesis by acting together with PPARGC1A and CEBPA to activate the expression of genes such as IGFBP1, G6PC1 and PCK1. Also promotes gluconeogenesis by directly promoting expression of PPARGC1A and G6PC1. Important regulator of cell death acting downstream of CDK1, PKB/AKT1 and STK4/MST1. Promotes neural cell death. Mediates insulin action on adipose tissue. Regulates the expression of adipogenic genes such as PPARG during preadipocyte differentiation and, adipocyte size and adipose tissue-specific gene expression in response to excessive calorie intake. Regulates the transcriptional activity of GADD45A and repair of nitric oxide-damaged DNA in beta-cells. Required for the autophagic cell death induction in response to starvation or oxidative stress in a transcription-independent manner. Mediates the function of MLIP in cardiomyocytes hypertrophy and cardiac remodeling. Positive regulator of apoptosis in cardiac smooth muscle cells as a result of its transcriptional activation of pro-apoptotic genes. Regulates endothelial cell (EC) viability and apoptosis in a PPIA/CYPA-dependent manner via transcription of CCL2 and BCL2L11 which are involved in EC chemotaxis and apoptosis. This is Forkhead box protein O1 (Foxo1) from Rattus norvegicus (Rat).